The chain runs to 400 residues: 3-phenylpropionate/cinnamic acid dioxygenase ferredoxin--NAD(+) reductase component (400 aa).

5–36 (TIIIVGGGQAAAMAAASLRQQGFTGELHLFSD) is a binding site for FAD. 146–174 (SVVIVGAGTIGLELAASATQRGCKVTVIE) contributes to the NAD(+) binding site.

This sequence belongs to the bacterial ring-hydroxylating dioxygenase ferredoxin reductase family. As to quaternary structure, this dioxygenase system consists of four proteins: the two subunits of the hydroxylase component (HcaE and HcaF), a ferredoxin (HcaC) and a ferredoxin reductase (HcaD). It depends on FAD as a cofactor.

It carries out the reaction 2 reduced [2Fe-2S]-[ferredoxin] + NAD(+) + H(+) = 2 oxidized [2Fe-2S]-[ferredoxin] + NADH. It functions in the pathway aromatic compound metabolism; 3-phenylpropanoate degradation. In terms of biological role, part of the multicomponent 3-phenylpropionate dioxygenase, that converts 3-phenylpropionic acid (PP) and cinnamic acid (CI) into 3-phenylpropionate-dihydrodiol (PP-dihydrodiol) and cinnamic acid-dihydrodiol (CI-dihydrodiol), respectively. In Escherichia coli (strain SMS-3-5 / SECEC), this protein is 3-phenylpropionate/cinnamic acid dioxygenase ferredoxin--NAD(+) reductase component.